The chain runs to 801 residues: PR domain zinc finger protein 4 (801 aa).

Positions 412–529 (KQLVLRQSIV…PENELLFYYS (118 aa)) constitute an SET domain. A C2H2-type 1; atypical zinc finger spans residues 545-566 (HLCNCGKECNSYTEFKAHLTSH). 4 consecutive C2H2-type zinc fingers follow at residues 618-640 (HKCDFCSKAFSDPSNLRTHLKIH), 646-668 (YRCTLCDKSFTQKAHLESHMVIH), 674-696 (LKCDYCDKLFMRRQDLKQHVLIH), and 702-724 (IKCPKCDKLFLRTNHLKKHLNSH). A C2H2-type 6; atypical zinc finger spans residues 730-752 (YVCEKCTKAYLTKYHLTRHLKTC). Positions 751-782 (TCKGPTSSSSAPEEEEEDDSEEEDLADSVGTE) are disordered. The segment covering 762 to 776 (PEEEEEDDSEEEDLA) has biased composition (acidic residues).

It belongs to the class V-like SAM-binding methyltransferase superfamily. In terms of tissue distribution, expressed in many tissues. Highly expressed in ovary, testis, pancreas, brain, heart and prostate.

It is found in the nucleus. Functionally, may function as a transcription factor involved in cell differentiation. The protein is PR domain zinc finger protein 4 (PRDM4) of Homo sapiens (Human).